We begin with the raw amino-acid sequence, 72 residues long: UPF0270 protein YheU (72 aa).

This sequence belongs to the UPF0270 family.

In Escherichia coli (strain UTI89 / UPEC), this protein is UPF0270 protein YheU.